Consider the following 343-residue polypeptide: MGRAPCCEKVGIKKGRWTAEEDRTLSDYIQSNGEGSWRSLPKNAGLKRCGKSCRLRWINYLRSDIKRGNITPEEEDVIVKLHSTLGTRWSTIASNLPGRTDNEIKNYWNSHLSRKLHGYFRKPTVANTVENAPPPPKRRPGRTSRSAMKPKFILNPKNHKTPNSFKANKSDIVLPTTTIENGEGDKEDALMVLSSSSLSGAEEPGLGPCGYGDDGDCNPSINGDDGALCLNDDIFDSCFLLDDSHAVHVSSCESNNVKNSEPYGGMSVGHKNIETMADDFVDWDFVWREGQTLWDEKEDLDSVLSRLLDGEEMESEIRQRDSNDFGEPLDIDEENKMAAWLLS.

2 consecutive HTH myb-type domains span residues 9 to 61 (KVGI…INYL) and 62 to 116 (RSDI…SRKL). 2 DNA-binding regions (H-T-H motif) span residues 37–61 (WRSL…INYL) and 89–112 (WSTI…NSHL). A disordered region spans residues 126-146 (ANTVENAPPPPKRRPGRTSRS).

As to expression, expressed in seedlings, roots, cotyledons, leaves and apical meristems.

It is found in the nucleus. Modulates overall growth by reducing the proliferation activity of meristematic cells and delaying development. Flavonol-specific transcription activator involved in the regulation of several genes of flavonoid biosynthesis. Activates the expression of CHS, CHI, F3H and FLS1. Confers tolerance to UV-B. The protein is Transcription factor MYB11 of Arabidopsis thaliana (Mouse-ear cress).